The sequence spans 197 residues: Molybdenum cofactor guanylyltransferase (197 aa).

GTP is bound by residues 12-14 (LAG), Lys-25, Asn-53, Asp-71, and Asp-101. Asp-101 serves as a coordination point for Mg(2+).

It belongs to the MobA family. In terms of assembly, monomer. Mg(2+) serves as cofactor.

The protein localises to the cytoplasm. It catalyses the reaction Mo-molybdopterin + GTP + H(+) = Mo-molybdopterin guanine dinucleotide + diphosphate. Functionally, transfers a GMP moiety from GTP to Mo-molybdopterin (Mo-MPT) cofactor (Moco or molybdenum cofactor) to form Mo-molybdopterin guanine dinucleotide (Mo-MGD) cofactor. In Bordetella pertussis (strain Tohama I / ATCC BAA-589 / NCTC 13251), this protein is Molybdenum cofactor guanylyltransferase.